We begin with the raw amino-acid sequence, 445 residues long: Phosphoglucosamine mutase (445 aa).

Ser-102 acts as the Phosphoserine intermediate in catalysis. Mg(2+)-binding residues include Ser-102, Asp-241, Asp-243, and Asp-245. Ser-102 is subject to Phosphoserine.

The protein belongs to the phosphohexose mutase family. Requires Mg(2+) as cofactor. Activated by phosphorylation.

The enzyme catalyses alpha-D-glucosamine 1-phosphate = D-glucosamine 6-phosphate. Catalyzes the conversion of glucosamine-6-phosphate to glucosamine-1-phosphate. The sequence is that of Phosphoglucosamine mutase from Aliivibrio fischeri (strain MJ11) (Vibrio fischeri).